The following is a 184-amino-acid chain: Endothelial cell-specific molecule 1 (184 aa).

A signal peptide spans 1 to 21; the sequence is MKSLLLLTTLLIPLHLGMAWS. Residues 24–102 enclose the IGFBP N-terminal domain; that stretch reads YAVDCPEHCD…GDEFGVCKDC (79 aa). 6 cysteine pairs are disulfide-bonded: Cys28–Cys51, Cys32–Cys53, Cys37–Cys54, Cys43–Cys57, Cys65–Cys83, and Cys77–Cys99. Residues 145–184 form a disordered region; sequence RTSASQTERDAASGDGNAVREEIGDRNAARPSVMKWLNPR. The segment covering 151–172 has biased composition (basic and acidic residues); sequence TERDAASGDGNAVREEIGDRNA. Residue Ser157 is glycosylated (O-linked (Xyl...) (chondroitin sulfate) serine).

O-glycosylated; contains chondroitin sulfate and dermatan sulfate. In terms of tissue distribution, pineal gland specific.

The protein localises to the secreted. Functionally, involved in angiogenesis; promotes angiogenic sprouting. May have potent implications in lung endothelial cell-leukocyte interactions. The sequence is that of Endothelial cell-specific molecule 1 (Esm1) from Rattus norvegicus (Rat).